A 564-amino-acid chain; its full sequence is MAAPKNSIPSLAECQCGICMEILVEPVTLPCNHTLCNPCFQSTVEKANLCCPFCRRRVSSWTRYHTRRNSLVNTDLWEIIQKHYAKECKLRISGQESKEIVDEYQPVRLLSKPGELRREYEEEISKVEAERQASKEEENKASEEYIQRLLAEEEEEEKRRTERRRSEMEEQLRGDEELARRLSTSINSNYERNILASPLSSRKSDPVTNKSQKKNTNKQKNFGDIQRYLSPKSKPGTAWACKTEHGEDMCKSKETDSSDTKSPVLQDTDVEESMPTHSPQTCPETQGQGPEPLTEMPVPWLCARNAEQCLEGKAEAVSTNPDDSCIVNDGGPRAIVSNSKEAAVKPPTKIENEEYSVSGVTQLTGGNGVPTESRVYDLLVGKEISERENQESVFEEVMDPCFSAKRRKIFITSSLDQEETEVNFTQKLIDLEHMLFERHKQEEQDRLLALQLQKEADKEKMVPNRQKGSPDQYQLRTSSPPDGLLNGQRKNVKDRNSPKQTADRSKSQRSRKGEYWETFESTWKGSVNGTKMPTPRKDSCNVSKRACPLQHRSAQKSILQMFQR.

The segment at 16-55 adopts an RING-type zinc-finger fold; that stretch reads CGICMEILVEPVTLPCNHTLCNPCFQSTVEKANLCCPFCR. S70 carries the phosphoserine modification. The LR motif 1 motif lies at 110–128; the sequence is LSKPGELRREYEEEISKVE. Position 134 is a phosphoserine (S134). Residues 143-151 carry the UMI motif motif; that stretch reads EEYIQRLLA. Disordered stretches follow at residues 149-179 and 193-291; these read LLAE…EELA and NILA…QGPE. The segment covering 157 to 179 has biased composition (basic and acidic residues); it reads EKRRTERRRSEMEEQLRGDEELA. Residues 168-191 carry the MIU motif 1 motif; that stretch reads MEEQLRGDEELARRLSTSINSNYE. A Phosphoserine modification is found at S197. K210 participates in a covalent cross-link: Glycyl lysine isopeptide (Lys-Gly) (interchain with G-Cter in SUMO2). Basic and acidic residues predominate over residues 242–259; sequence KTEHGEDMCKSKETDSSD. The span at 275-288 shows a compositional bias: polar residues; it reads PTHSPQTCPETQGQ. Residues T348 and T361 each carry the phosphothreonine modification. 2 positions are modified to phosphoserine: S413 and S414. The MIU motif 2 signature appears at 438–461; that stretch reads RHKQEEQDRLLALQLQKEADKEKM. A disordered region spans residues 455–564; it reads EADKEKMVPN…QKSILQMFQR (110 aa). The LR motif 2 signature appears at 465–476; it reads RQKGSPDQYQLR. A compositionally biased stretch (polar residues) spans 466–480; sequence QKGSPDQYQLRTSSP. S469 is subject to Phosphoserine. The segment covering 491–515 has biased composition (basic and acidic residues); that stretch reads NVKDRNSPKQTADRSKSQRSRKGEY. Polar residues-rich tracts occupy residues 519–531 and 555–564; these read FEST…NGTK and QKSILQMFQR. K524 participates in a covalent cross-link: Glycyl lysine isopeptide (Lys-Gly) (interchain with G-Cter in SUMO2).

Belongs to the RNF168 family. In terms of assembly, monomer. Interacts with UBE2N/UBC13. Sumoylated with SUMO1 by PIAS4 in response to double-strand breaks (DSBs). Post-translationally, ubiquitinated.

The protein localises to the nucleus. The catalysed reaction is S-ubiquitinyl-[E2 ubiquitin-conjugating enzyme]-L-cysteine + [acceptor protein]-L-lysine = [E2 ubiquitin-conjugating enzyme]-L-cysteine + N(6)-ubiquitinyl-[acceptor protein]-L-lysine.. It functions in the pathway protein modification; protein ubiquitination. Its function is as follows. E3 ubiquitin-protein ligase required for accumulation of repair proteins to sites of DNA damage. Acts with UBE2N/UBC13 to amplify the RNF8-dependent histone ubiquitination. Recruited to sites of DNA damage at double-strand breaks (DSBs) by binding to ubiquitinated histone H2A and H2AX and amplifies the RNF8-dependent H2A ubiquitination, promoting the formation of 'Lys-63'-linked ubiquitin conjugates. This leads to concentrate ubiquitinated histones H2A and H2AX at DNA lesions to the threshold required for recruitment of TP53BP1 and BRCA1. Also recruited at DNA interstrand cross-links (ICLs) sites and promotes accumulation of 'Lys-63'-linked ubiquitination of histones H2A and H2AX, leading to recruitment of FAAP20 and Fanconi anemia (FA) complex, followed by interstrand cross-link repair. H2A ubiquitination also mediates the ATM-dependent transcriptional silencing at regions flanking DSBs in cis, a mechanism to avoid collision between transcription and repair intermediates. Also involved in class switch recombination in immune system, via its role in regulation of DSBs repair. Following DNA damage, promotes the ubiquitination and degradation of JMJD2A/KDM4A in collaboration with RNF8, leading to unmask H4K20me2 mark and promote the recruitment of TP53BP1 at DNA damage sites. Not able to initiate 'Lys-63'-linked ubiquitination in vitro; possibly due to partial occlusion of the UBE2N/UBC13-binding region. Catalyzes monoubiquitination of 'Lys-13' and 'Lys-15' of nucleosomal histone H2A (H2AK13Ub and H2AK15Ub, respectively). In Rattus norvegicus (Rat), this protein is E3 ubiquitin-protein ligase RNF168.